The chain runs to 1249 residues: Nuclear envelope pore membrane protein POM 121 (1249 aa).

A compositionally biased stretch (low complexity) spans 1 to 10; the sequence is MSPAAAAAGA. The disordered stretch occupies residues 1-27; the sequence is MSPAAAAAGAGERRRPIASVRDGRGRG. The cisternal side stretch occupies residues 1-34; sequence MSPAAAAAGAGERRRPIASVRDGRGRGCGGPARA. Residues 1 to 285 form a required for targeting to the nucleus and nuclear pore complex region; the sequence is MSPAAAAAGA…APPDRRFSRS (285 aa). Basic and acidic residues predominate over residues 11–25; sequence GERRRPIASVRDGRG. The chain crosses the membrane as a helical span at residues 35-55; the sequence is VLLGLSLVGLLLYLVPAAAAL. The interval 56–1249 is pore side; sequence AWLTVGATAA…QARRQHTRKK (1194 aa). At Ser94 the chain carries Phosphoserine. 5 disordered regions span residues 136–220, 319–530, 602–776, 959–986, and 1226–1249; these read LMGS…CGTL, KEKK…LGYS, KKMQ…PVFS, PLPS…AKPA, and IGAG…TRKK. Residues 168–190 show a composition bias toward pro residues; that stretch reads ARPAPRSPPPRSPPPRSPPPSPP. 5 positions are modified to phosphoserine: Ser345, Ser351, Ser371, Ser393, and Ser396. Polar residues predominate over residues 405 to 423; the sequence is IPSSSRNAITSSYSSTRGI. Residues 432–445 are compositionally biased toward low complexity; the sequence is PSSSPFSSPASSRS. 2 stretches are compositionally biased toward basic and acidic residues: residues 450 to 462 and 472 to 486; these read RPAK…ELCH and ADRE…DTTP. The segment covering 491-502 has biased composition (polar residues); sequence NSNSQSTPGSSG. Low complexity predominate over residues 635 to 652; it reads PPLGLSQSGPPGLLPSPS. The segment covering 683–696 has biased composition (polar residues); it reads QAETATKPQATSAP. Low complexity-rich tracts occupy residues 712–726 and 749–770; these read SPSS…SAPP and SVTA…TAPT. Positions 1239 to 1249 are enriched in basic residues; it reads LQARRQHTRKK.

The protein belongs to the POM121 family.

It localises to the nucleus. It is found in the nuclear pore complex. The protein localises to the nucleus membrane. Its subcellular location is the endoplasmic reticulum membrane. Its function is as follows. Essential component of the nuclear pore complex (NPC). The repeat-containing domain may be involved in anchoring components of the pore complex to the pore membrane. When overexpressed in cells induces the formation of cytoplasmic annulate lamellae (AL). This Homo sapiens (Human) protein is Nuclear envelope pore membrane protein POM 121 (POM121).